Here is a 327-residue protein sequence, read N- to C-terminus: GMP reductase (327 aa).

Cys176 (thioimidate intermediate) is an active-site residue. 205 to 228 (IIADGGIRTHGDIAKSIRFGASMV) is a binding site for NADP(+).

It belongs to the IMPDH/GMPR family. GuaC type 2 subfamily.

It carries out the reaction IMP + NH4(+) + NADP(+) = GMP + NADPH + 2 H(+). Catalyzes the irreversible NADPH-dependent deamination of GMP to IMP. It functions in the conversion of nucleobase, nucleoside and nucleotide derivatives of G to A nucleotides, and in maintaining the intracellular balance of A and G nucleotides. The sequence is that of GMP reductase from Streptococcus pyogenes serotype M5 (strain Manfredo).